Reading from the N-terminus, the 202-residue chain is uncharacterized protein (202 aa).

This is an uncharacterized protein from Escherichia coli (Bacteriophage T4).